We begin with the raw amino-acid sequence, 336 residues long: Dihydroorotate dehydrogenase (quinone) (336 aa).

FMN contacts are provided by residues 62–66 (AGLDK) and Thr-86. Lys-66 serves as a coordination point for substrate. Residue 111–115 (NRMGF) participates in substrate binding. Residues Asn-139 and Asn-172 each contribute to the FMN site. Asn-172 is a binding site for substrate. The Nucleophile role is filled by Ser-175. Residue Asn-177 participates in substrate binding. 2 residues coordinate FMN: Lys-217 and Thr-245. 246 to 247 (NT) is a substrate binding site. Residues Gly-268, Gly-297, and 318–319 (YS) each bind FMN.

It belongs to the dihydroorotate dehydrogenase family. Type 2 subfamily. Monomer. FMN is required as a cofactor.

The protein localises to the cell membrane. It catalyses the reaction (S)-dihydroorotate + a quinone = orotate + a quinol. It participates in pyrimidine metabolism; UMP biosynthesis via de novo pathway; orotate from (S)-dihydroorotate (quinone route): step 1/1. Functionally, catalyzes the conversion of dihydroorotate to orotate with quinone as electron acceptor. This is Dihydroorotate dehydrogenase (quinone) from Escherichia coli (strain SE11).